Reading from the N-terminus, the 327-residue chain is Phenylalanine--tRNA ligase alpha subunit (327 aa).

E252 is a Mg(2+) binding site.

This sequence belongs to the class-II aminoacyl-tRNA synthetase family. Phe-tRNA synthetase alpha subunit type 1 subfamily. Tetramer of two alpha and two beta subunits. Mg(2+) is required as a cofactor.

It localises to the cytoplasm. The enzyme catalyses tRNA(Phe) + L-phenylalanine + ATP = L-phenylalanyl-tRNA(Phe) + AMP + diphosphate + H(+). The protein is Phenylalanine--tRNA ligase alpha subunit of Shewanella amazonensis (strain ATCC BAA-1098 / SB2B).